The chain runs to 154 residues: uncharacterized protein (154 aa).

A helical transmembrane segment spans residues 23–43 (SAVALVTFAGAALSGVIPAIA).

It localises to the membrane. This is an uncharacterized protein from Mycobacterium tuberculosis (strain CDC 1551 / Oshkosh).